Consider the following 541-residue polypeptide: Glucose-6-phosphate isomerase (541 aa).

The Proton donor role is filled by Glu346. Catalysis depends on residues His377 and Lys506.

It belongs to the GPI family.

It is found in the cytoplasm. The catalysed reaction is alpha-D-glucose 6-phosphate = beta-D-fructose 6-phosphate. It functions in the pathway carbohydrate biosynthesis; gluconeogenesis. Its pathway is carbohydrate degradation; glycolysis; D-glyceraldehyde 3-phosphate and glycerone phosphate from D-glucose: step 2/4. Catalyzes the reversible isomerization of glucose-6-phosphate to fructose-6-phosphate. The polypeptide is Glucose-6-phosphate isomerase (Sinorhizobium medicae (strain WSM419) (Ensifer medicae)).